A 793-amino-acid polypeptide reads, in one-letter code: Sucrose synthase (793 aa).

Positions 263–742 (MISRILIVSI…ALARVAERYT (480 aa)) are GT-B glycosyltransferase.

The protein belongs to the glycosyltransferase 1 family. Homotetramer.

The enzyme catalyses an NDP-alpha-D-glucose + D-fructose = a ribonucleoside 5'-diphosphate + sucrose + H(+). It carries out the reaction ADP-alpha-D-glucose + D-fructose = sucrose + ADP + H(+). In terms of biological role, catalyzes the reversible conversion of sucrose and a nucleotide disphosphate (NDP) into fructose and NDP-glucose; although the reaction is freely reversible in vitro, the physiological reaction seems to be sucrose cleavage. Unlike characterized plant enzymes prefers ADP as a cosubstrate, whereas plants prefer UDP. The KM for sucrose is 45-fold lower in the presence of ADP than UDP. Its preference for ADP over UDP suggests it may directly link sucrose and glycogen metabolism. In Acidithiobacillus caldus (strain ATCC 51756 / DSM 8584 / KU), this protein is Sucrose synthase.